Consider the following 317-residue polypeptide: Olfactory receptor 1082 (317 aa).

The Extracellular portion of the chain corresponds to 1–26 (MESGNSTRRFSSFFLLGFTENPQLHF). A glycan (N-linked (GlcNAc...) asparagine) is linked at Asn-5. The chain crosses the membrane as a helical span at residues 27 to 51 (LIFALFLSMYLVTVLGNLLIIMAII). Residues 52–58 (TQSHLHT) lie on the Cytoplasmic side of the membrane. A helical membrane pass occupies residues 59-80 (PMYFFLANLSFVDICFTSTTIP). Topologically, residues 81-101 (KMLVNIYTQSKSITYEDCISQ) are extracellular. A disulfide bond links Cys-98 and Cys-190. Residues 102–121 (MCVFLVFAELGNFLLAVMAY) traverse the membrane as a helical segment. The Cytoplasmic portion of the chain corresponds to 122–140 (DRYVAXCHPLCYTVIVNHR). The helical transmembrane segment at 141-159 (LCILLLLLSWVISIFHAFI) threads the bilayer. Residues 160 to 197 (QSLIVLQLTFCGDVKIPHFFCELNQLSQLTCSDNFPSH) are Extracellular-facing. The helical transmembrane segment at 198-220 (LIMNLVPVMLAAISFSGILYSYF) threads the bilayer. Topologically, residues 221 to 237 (KIVSSIHSISTVQGKYK) are cytoplasmic. The chain crosses the membrane as a helical span at residues 238-261 (AFSTCASHLSIVSLFYSTGLGVYV). Over 262-273 (SSAVVQSSHSAA) the chain is Extracellular. The chain crosses the membrane as a helical span at residues 274-293 (SASVMYTVVTPMLNPFIYSL). Topologically, residues 294-317 (RNKDVKRALERLLEGNCKVHHWTG) are cytoplasmic.

Belongs to the G-protein coupled receptor 1 family. Olfactory epithelium.

It is found in the cell membrane. In terms of biological role, odorant receptor. The polypeptide is Olfactory receptor 1082 (Olr1082) (Rattus norvegicus (Rat)).